The sequence spans 599 residues: DNA-directed RNA polymerase III subunit RPC3 (599 aa).

The disordered stretch occupies residues 350 to 375 (PKKRSASNGDDERPTKKIKTEDSDDI). Residues 359 to 370 (DDERPTKKIKTE) show a composition bias toward basic and acidic residues. A leucine-zipper region spans residues 528-549 (LIFSMAEILSNIQAFREDHKIL).

This sequence belongs to the RNA polymerase beta chain family. Component of the RNA polymerase III (Pol III) complex consisting of 17 subunits.

It localises to the nucleus. DNA-dependent RNA polymerase catalyzes the transcription of DNA into RNA using the four ribonucleoside triphosphates as substrates. Specific core component of RNA polymerase III which synthesizes small RNAs, such as 5S rRNA and tRNAs. The polypeptide is DNA-directed RNA polymerase III subunit RPC3 (RPC82) (Scheffersomyces stipitis (strain ATCC 58785 / CBS 6054 / NBRC 10063 / NRRL Y-11545) (Yeast)).